Consider the following 88-residue polypeptide: Translation initiation factor IF-1 2 (88 aa).

The 72-residue stretch at 1 to 72 (MAKEELIEMQ…TKGRITFRHL (72 aa)) folds into the S1-like domain.

This sequence belongs to the IF-1 family. Component of the 30S ribosomal translation pre-initiation complex which assembles on the 30S ribosome in the order IF-2 and IF-3, IF-1 and N-formylmethionyl-tRNA(fMet); mRNA recruitment can occur at any time during PIC assembly.

It is found in the cytoplasm. One of the essential components for the initiation of protein synthesis. Stabilizes the binding of IF-2 and IF-3 on the 30S subunit to which N-formylmethionyl-tRNA(fMet) subsequently binds. Helps modulate mRNA selection, yielding the 30S pre-initiation complex (PIC). Upon addition of the 50S ribosomal subunit IF-1, IF-2 and IF-3 are released leaving the mature 70S translation initiation complex. The sequence is that of Translation initiation factor IF-1 2 from Acidovorax sp. (strain JS42).